Reading from the N-terminus, the 495-residue chain is Membrane-bound lytic murein transglycosylase F (495 aa).

Residues 1–29 form the signal peptide; that stretch reads MEIRKLSLSTIRSIITSLSVLVLVISASA. Residues 30–273 form a non-LT domain region; the sequence is TLVRSTPPNV…VTKHFFERHI (244 aa). The interval 274-495 is LT domain; sequence DEVTTGEAMV…TAAQGENLSL (222 aa). The active site involves glutamate 320.

This sequence in the N-terminal section; belongs to the bacterial solute-binding protein 3 family. It in the C-terminal section; belongs to the transglycosylase Slt family.

The protein resides in the cell outer membrane. It carries out the reaction Exolytic cleavage of the (1-&gt;4)-beta-glycosidic linkage between N-acetylmuramic acid (MurNAc) and N-acetylglucosamine (GlcNAc) residues in peptidoglycan, from either the reducing or the non-reducing ends of the peptidoglycan chains, with concomitant formation of a 1,6-anhydrobond in the MurNAc residue.. Murein-degrading enzyme that degrades murein glycan strands and insoluble, high-molecular weight murein sacculi, with the concomitant formation of a 1,6-anhydromuramoyl product. Lytic transglycosylases (LTs) play an integral role in the metabolism of the peptidoglycan (PG) sacculus. Their lytic action creates space within the PG sacculus to allow for its expansion as well as for the insertion of various structures such as secretion systems and flagella. The sequence is that of Membrane-bound lytic murein transglycosylase F from Cellvibrio japonicus (strain Ueda107) (Pseudomonas fluorescens subsp. cellulosa).